Reading from the N-terminus, the 542-residue chain is Glucans biosynthesis protein G (542 aa).

A signal peptide spans 1-34; that stretch reads MVSLLRCPSSKPYSSLICSLTLGAVVALSGVAYA.

This sequence belongs to the OpgD/OpgG family.

The protein resides in the periplasm. The protein operates within glycan metabolism; osmoregulated periplasmic glucan (OPG) biosynthesis. In terms of biological role, involved in the biosynthesis of osmoregulated periplasmic glucans (OPGs). The sequence is that of Glucans biosynthesis protein G from Shewanella baltica (strain OS155 / ATCC BAA-1091).